The following is a 222-amino-acid chain: PKHD-type hydroxylase PCC8801_2196 (222 aa).

Residues 78–175 (RIHSLLFSRY…RLVVVGWIES (98 aa)) enclose the Fe2OG dioxygenase domain. 3 residues coordinate Fe cation: histidine 96, aspartate 98, and histidine 156. Arginine 166 provides a ligand contact to 2-oxoglutarate.

Fe(2+) serves as cofactor. It depends on L-ascorbate as a cofactor.

In Rippkaea orientalis (strain PCC 8801 / RF-1) (Cyanothece sp. (strain PCC 8801)), this protein is PKHD-type hydroxylase PCC8801_2196.